The chain runs to 116 residues: Protein lin-52 homolog (116 aa).

Residues S28 and S53 each carry the phosphoserine modification.

This sequence belongs to the lin-52 family. In terms of assembly, component of the DREAM complex (also named LINC complex) at least composed of E2F4, E2F5, LIN9, LIN37, LIN52, LIN54, MYBL1, MYBL2, RBL1, RBL2, RBBP4, TFDP1 and TFDP2. The complex exists in quiescent cells where it represses cell cycle-dependent genes. It dissociates in S phase when LIN9, LIN37, LIN52 and LIN54 form a subcomplex that binds to MYBL2.

This Homo sapiens (Human) protein is Protein lin-52 homolog (LIN52).